The primary structure comprises 468 residues: ATP synthase subunit beta (468 aa).

155-162 (GGAGVGKT) contributes to the ATP binding site.

This sequence belongs to the ATPase alpha/beta chains family. F-type ATPases have 2 components, CF(1) - the catalytic core - and CF(0) - the membrane proton channel. CF(1) has five subunits: alpha(3), beta(3), gamma(1), delta(1), epsilon(1). CF(0) has three main subunits: a(1), b(2) and c(9-12). The alpha and beta chains form an alternating ring which encloses part of the gamma chain. CF(1) is attached to CF(0) by a central stalk formed by the gamma and epsilon chains, while a peripheral stalk is formed by the delta and b chains.

It is found in the cell inner membrane. The catalysed reaction is ATP + H2O + 4 H(+)(in) = ADP + phosphate + 5 H(+)(out). Produces ATP from ADP in the presence of a proton gradient across the membrane. The catalytic sites are hosted primarily by the beta subunits. This Leptospira biflexa serovar Patoc (strain Patoc 1 / ATCC 23582 / Paris) protein is ATP synthase subunit beta.